The following is a 232-amino-acid chain: Lipoprotein-releasing system ATP-binding protein LolD (232 aa).

One can recognise an ABC transporter domain in the interval 11-232; it reads IEVTDLQRAF…LHDGRLIEEY (222 aa). 47-54 is an ATP binding site; the sequence is GPSGAGKS.

It belongs to the ABC transporter superfamily. Lipoprotein translocase (TC 3.A.1.125) family. The complex is composed of two ATP-binding proteins (LolD) and two transmembrane proteins (LolC and LolE).

It localises to the cell inner membrane. Its function is as follows. Part of the ABC transporter complex LolCDE involved in the translocation of mature outer membrane-directed lipoproteins, from the inner membrane to the periplasmic chaperone, LolA. Responsible for the formation of the LolA-lipoprotein complex in an ATP-dependent manner. This chain is Lipoprotein-releasing system ATP-binding protein LolD, found in Zymomonas mobilis subsp. mobilis (strain ATCC 31821 / ZM4 / CP4).